The chain runs to 73 residues: Disintegrin barbourin (73 aa).

The Disintegrin domain occupies 1 to 73 (EAGEECDCGS…ADCPRNGLYG (73 aa)). Intrachain disulfides connect cysteine 6-cysteine 21, cysteine 8-cysteine 16, cysteine 15-cysteine 38, cysteine 29-cysteine 35, cysteine 34-cysteine 59, and cysteine 47-cysteine 66. The short motif at 51-53 (KGD) is the Cell attachment site; atypical (KGD) element.

Belongs to the venom metalloproteinase (M12B) family. P-II subfamily. P-IIa sub-subfamily. Monomer. In terms of tissue distribution, expressed by the venom gland.

It localises to the secreted. Functionally, inhibitor of ligand binding to the integrins alpha-IIb/beta-3 (ITGA2B/ITGB3). Competition with fibrinogen for the RGD recognition sites on the alpha-IIb/beta-3 integrin results in the inhibition of platelet aggregation induced by ADP, thrombin, platelet-activating factor and collagen. The protein is Disintegrin barbourin of Sistrurus miliarius barbouri (Dusky pigmy rattlesnake).